Reading from the N-terminus, the 228-residue chain is Non-specific lipid-transfer protein EPAD1 (228 aa).

Positions 1–24 are cleaved as a signal peptide; it reads MERSHLAVLLGLLAFAAGVPAAAA. 3 cysteine pairs are disulfide-bonded: Cys-40–Cys-62, Cys-63–Cys-105, and Cys-78–Cys-119. An N-linked (GlcNAc...) asparagine glycan is attached at Asn-94. The interval 124–207 is disordered; the sequence is PPASIVTAPP…PPRSGASSSL (84 aa). Residues 145–162 are compositionally biased toward pro residues; sequence REAPPPPPAAEKLSPPPQ.

This sequence belongs to the plant LTP family. In terms of tissue distribution, expressed in young panicles. Specifically expressed in pollen mother cells and young microspores.

The protein localises to the cell membrane. Its function is as follows. Plant non-specific lipid-transfer protein that binds phospholipids in vitro. Required for correct pollen exine patterning by controlling the continuity and homogeneity of the primexine distribution. In Oryza sativa subsp. japonica (Rice), this protein is Non-specific lipid-transfer protein EPAD1.